A 328-amino-acid polypeptide reads, in one-letter code: Carbonic anhydrase-related protein 11 (328 aa).

The first 23 residues, 1 to 23, serve as a signal peptide directing secretion; the sequence is MGAAPRLSAPRVLVLWAALGAAA. Residues 33–303 form the Alpha-carbonic anhydrase domain; the sequence is DWWSYKDNLQ…LAHRALRGNR (271 aa). N-linked (GlcNAc...) asparagine glycosylation is present at Asn118. The disordered stretch occupies residues 300–328; the sequence is RGNRDPRHPERRCRGPNYRLHVDDVPHGL. Over residues 319 to 328 the composition is skewed to basic and acidic residues; it reads LHVDDVPHGL.

This sequence belongs to the alpha-carbonic anhydrase family.

It is found in the secreted. In terms of biological role, does not have a catalytic activity. The protein is Carbonic anhydrase-related protein 11 (CA11) of Ovis aries (Sheep).